A 92-amino-acid chain; its full sequence is MARSLKKNPFVANHSLRKIQNLNIKEEKKIIVTWSRASVIVPAMIGHTIAVHNGREHLPIYVTDRMVDHKLGEFAPTLLFQGHARNDKKSRR.

This sequence belongs to the universal ribosomal protein uS19 family.

Its subcellular location is the plastid. It is found in the chloroplast. Its function is as follows. Protein S19 forms a complex with S13 that binds strongly to the 16S ribosomal RNA. The chain is Small ribosomal subunit protein uS19c (rps19) from Picea abies (Norway spruce).